Here is a 507-residue protein sequence, read N- to C-terminus: Sensor protein CseC (507 aa).

The interval 1-42 is disordered; it reads MRGFFRQRRSVSPPGHPYDRTGPGEHAGPGARTGPGGRPRVL. A compositionally biased stretch (gly residues) spans 25 to 37; that stretch reads EHAGPGARTGPGG. The next 2 membrane-spanning stretches (helical) occupy residues 60–80 and 183–203; these read LSAA…LVVH and ALVI…VLIG. The 57-residue stretch at 204–260 folds into the HAMP domain; the sequence is GQLSRRLREAAAAANRVASGEPDVRVRDAIGGVVRDETDDVARAVDAMADALQQRIE. The 203-residue stretch at 268–470 folds into the Histidine kinase domain; the sequence is DIAHELRTPV…VAVLWLPEHA (203 aa). Histidine 271 bears the Phosphohistidine; by autocatalysis mark. Residues 472-507 are disordered; the sequence is TNTGSYPMLPDRSKSGASSSARDMSREASQGMSRKP. Residues 486–507 show a composition bias toward polar residues; sequence SGASSSARDMSREASQGMSRKP.

Its subcellular location is the cell membrane. It carries out the reaction ATP + protein L-histidine = ADP + protein N-phospho-L-histidine.. Its function is as follows. Member of the two-component regulatory system CseB/CseC involved in the stability of the cell envelope, through activation of transcription of RNA polymerase sigma-E factor. CseC functions as a membrane-associated protein kinase that phosphorylates CseB in response to changes in the cell envelope. In Streptomyces coelicolor (strain ATCC BAA-471 / A3(2) / M145), this protein is Sensor protein CseC (cseC).